Reading from the N-terminus, the 916-residue chain is Dual serine/threonine and tyrosine protein kinase (916 aa).

Positions 1-19 are enriched in basic and acidic residues; the sequence is MQRDGTRSARRMDEGDRRT. The tract at residues 1 to 27 is disordered; sequence MQRDGTRSARRMDEGDRRTGSAGRSGS. The Protein kinase domain maps to 641 to 895; the sequence is PRIGRELGRG…PLMGIVQPML (255 aa). ATP-binding positions include 647-655 and Lys-670; that span reads LGRGQYGVV. Asp-766 acts as the Proton acceptor in catalysis.

It belongs to the protein kinase superfamily. Ser/Thr protein kinase family.

The protein localises to the cytoplasm. It localises to the cell membrane. The protein resides in the apical cell membrane. It is found in the basolateral cell membrane. Its subcellular location is the cell junction. The enzyme catalyses L-seryl-[protein] + ATP = O-phospho-L-seryl-[protein] + ADP + H(+). It carries out the reaction L-threonyl-[protein] + ATP = O-phospho-L-threonyl-[protein] + ADP + H(+). It catalyses the reaction L-tyrosyl-[protein] + ATP = O-phospho-L-tyrosyl-[protein] + ADP + H(+). Its function is as follows. May act as a positive regulator of ERK phosphorylation downstream of fibroblast growth factor-receptor activation. May induce both caspase-dependent apoptosis and caspase-independent cell death. May play a role in the embryonic development. The chain is Dual serine/threonine and tyrosine protein kinase (dstyk) from Xenopus laevis (African clawed frog).